Consider the following 661-residue polypeptide: Zeaxanthin epoxidase, chloroplastic (661 aa).

Residues 1–50 (MASTLFYNSMNLSAAVFSRTHFPIPINKDFPLEFSPCIHTDYHLRSRTRS) constitute a chloroplast transit peptide. FAD contacts are provided by residues 82–110 (RILV…VVFE) and 360–373 (ILTW…LLGD). The 50-residue stretch at 558-607 (CIIGSAPHGDVSGISIAIPKPQVSEMHARISYKDGAFYLTDLRSEHGTWI) folds into the FHA domain.

FAD is required as a cofactor.

It is found in the plastid. The protein resides in the chloroplast. It catalyses the reaction all-trans-zeaxanthin + 4 reduced [2Fe-2S]-[ferredoxin] + 2 O2 + 4 H(+) = all-trans-violaxanthin + 4 oxidized [2Fe-2S]-[ferredoxin] + 2 H2O. It functions in the pathway plant hormone biosynthesis; abscisate biosynthesis. Functionally, converts zeaxanthin into antheraxanthin and subsequently violaxanthin. Involved in the epoxidation of zeaxanthin. The sequence is that of Zeaxanthin epoxidase, chloroplastic from Prunus armeniaca (Apricot).